Reading from the N-terminus, the 607-residue chain is DNA mismatch repair protein MutL (607 aa).

It belongs to the DNA mismatch repair MutL/HexB family.

This protein is involved in the repair of mismatches in DNA. It is required for dam-dependent methyl-directed DNA mismatch repair. May act as a 'molecular matchmaker', a protein that promotes the formation of a stable complex between two or more DNA-binding proteins in an ATP-dependent manner without itself being part of a final effector complex. This chain is DNA mismatch repair protein MutL, found in Anaeromyxobacter sp. (strain K).